The sequence spans 715 residues: MATAVSSYNDIQLETIQEVSCSTSCSSNSTTSSSSNSPKQNKVSPGYRNKPQQQQHKKGHKMGNYLLGKTIGSGTSSKVKIGTNILTGKQYAIKITKPKRIKERKEIEREISILKRLKHDNIIQLHDAIYEDDVGRICLILELVSGGELFDYIVARGRLSEKEGRKFFRQMLCGLIYCHSNMVCHRDLKLENLLVDEDGNLKISDFGYSNIIKPGNLLSTFCGSPVYAPPEILLEKRYNGNEVDIWSMGVILYAMVTGQLPWTLTDGVQVEGMDRLLRGEFKYPSHVILSDDVKDLINRMIVAEPVERATLDEIKTHVWVNKGYDMEPDQEYNKKVSDRLEKEQQQQTPQHQQTQQQLQPQSQLQQHSPRSPKPLFVDTIIGSNRPLNQSSPNLTIPQNKQYVSSNSNINININNNNNNNSNVINNSIKPIQFNSSSCLDEKKINCSAPTSPHSISPQFISPSPSTSTTPPLSPLSVSGQRSPPTFSSNPNIGHIPNNNHNSLSSSQNNINTSGKNQYHHHHHHQNHHSTSLFHNIFKKRQSVTSVSANSSPVIVSSNGGLNNNNHNNILHVSSSNINVDGASASAPQFSSSSSKRRFSLEDIVKAITIRSGKGKNPKIRSMKGPFNSGTTTMLNPIQLIEHIEENLNSTQISYRRNFYVFDCKTLCPRNETINFEIEVCKVNGMDMYGIKFKRLSGDAWSYSSSCIKIVESLKL.

Residues serine 24–serine 37 are compositionally biased toward low complexity. The disordered stretch occupies residues serine 24–tyrosine 65. The 256-residue stretch at tyrosine 65–valine 320 folds into the Protein kinase domain. Residues isoleucine 71 to valine 79 and lysine 94 each bind ATP. Aspartate 187 functions as the Proton acceptor in the catalytic mechanism. Over residues lysine 335–glutamine 344 the composition is skewed to basic and acidic residues. Disordered stretches follow at residues lysine 335–asparagine 399 and cysteine 446–threonine 530. Residues glutamine 345–serine 368 are compositionally biased toward low complexity. The segment covering isoleucine 381 to asparagine 399 has biased composition (polar residues). Low complexity-rich tracts occupy residues serine 451–serine 478 and serine 487–serine 513. Over residues glutamine 517–histidine 527 the composition is skewed to basic residues. Positions leucine 666–leucine 715 constitute a KA1 domain.

This sequence belongs to the protein kinase superfamily. CAMK Ser/Thr protein kinase family. SNF1 subfamily.

The catalysed reaction is L-seryl-[protein] + ATP = O-phospho-L-seryl-[protein] + ADP + H(+). It catalyses the reaction L-threonyl-[protein] + ATP = O-phospho-L-threonyl-[protein] + ADP + H(+). The chain is Probable serine/threonine-protein kinase MARK-B (mrkB) from Dictyostelium discoideum (Social amoeba).